The following is a 100-amino-acid chain: Small ribosomal subunit protein uS14 (100 aa).

The protein belongs to the universal ribosomal protein uS14 family. As to quaternary structure, part of the 30S ribosomal subunit. Contacts proteins S3 and S10.

Functionally, binds 16S rRNA, required for the assembly of 30S particles and may also be responsible for determining the conformation of the 16S rRNA at the A site. The polypeptide is Small ribosomal subunit protein uS14 (Prochlorococcus marinus subsp. pastoris (strain CCMP1986 / NIES-2087 / MED4)).